Consider the following 296-residue polypeptide: Lipoyl synthase (296 aa).

[4Fe-4S] cluster contacts are provided by Cys37, Cys42, Cys48, Cys63, Cys67, Cys70, and Ser276. The 217-residue stretch at 49 to 265 (WSKKHTTVMI…ERLAKTKGFL (217 aa)) folds into the Radical SAM core domain.

This sequence belongs to the radical SAM superfamily. Lipoyl synthase family. It depends on [4Fe-4S] cluster as a cofactor.

It localises to the cytoplasm. It carries out the reaction [[Fe-S] cluster scaffold protein carrying a second [4Fe-4S](2+) cluster] + N(6)-octanoyl-L-lysyl-[protein] + 2 oxidized [2Fe-2S]-[ferredoxin] + 2 S-adenosyl-L-methionine + 4 H(+) = [[Fe-S] cluster scaffold protein] + N(6)-[(R)-dihydrolipoyl]-L-lysyl-[protein] + 4 Fe(3+) + 2 hydrogen sulfide + 2 5'-deoxyadenosine + 2 L-methionine + 2 reduced [2Fe-2S]-[ferredoxin]. Its pathway is protein modification; protein lipoylation via endogenous pathway; protein N(6)-(lipoyl)lysine from octanoyl-[acyl-carrier-protein]: step 2/2. Functionally, catalyzes the radical-mediated insertion of two sulfur atoms into the C-6 and C-8 positions of the octanoyl moiety bound to the lipoyl domains of lipoate-dependent enzymes, thereby converting the octanoylated domains into lipoylated derivatives. The protein is Lipoyl synthase of Rickettsia rickettsii (strain Iowa).